An 881-amino-acid chain; its full sequence is Serine/threonine-protein kinase greatwall (881 aa).

The disordered stretch occupies residues 1–20 (MSTVEPLSDEGVAAGPRRIE). Positions 30–837 (FTIVKPISRG…LKELKHHPLF (808 aa)) constitute a Protein kinase domain. ATP-binding positions include 36–44 (ISRGAFGKV) and lysine 57. Residue aspartate 151 is the Proton acceptor of the active site. Disordered stretches follow at residues 310–345 (SPRL…VLNS) and 706–732 (ITPL…RRGA). Basic and acidic residues predominate over residues 312-321 (RLEKDVKQTE). Threonine 743 is subject to Phosphothreonine; by CDK1. Residues 838–881 (HGVDWDNLQNQPMPFIPQPDDETDTSYFEARNNAQHLTVSGFSL) enclose the AGC-kinase C-terminal domain.

It belongs to the protein kinase superfamily. AGC Ser/Thr protein kinase family. Post-translationally, phosphorylation at Thr-743 by CDK1 during M phase activates its kinase activity. Maximum phosphorylation occurs in prometaphase.

The protein localises to the cytoplasm. Its subcellular location is the cytoskeleton. The protein resides in the microtubule organizing center. It is found in the centrosome. It localises to the nucleus. The catalysed reaction is L-seryl-[protein] + ATP = O-phospho-L-seryl-[protein] + ADP + H(+). The enzyme catalyses L-threonyl-[protein] + ATP = O-phospho-L-threonyl-[protein] + ADP + H(+). Its function is as follows. Serine/threonine kinase that plays a key role in M phase by acting as a regulator of mitosis entry and maintenance. Acts by promoting the inactivation of protein phosphatase 2A (PP2A) during M phase: does not directly inhibit PP2A but acts by mediating phosphorylation and subsequent activation of ARPP19 and ENSA at 'Ser-62' and 'Ser-67', respectively. ARPP19 and ENSA are phosphatase inhibitors that specifically inhibit the PPP2R2D (PR55-delta) subunit of PP2A. Inactivation of PP2A during M phase is essential to keep cyclin-B1-CDK1 activity high. Following DNA damage, it is also involved in checkpoint recovery by being inhibited. The sequence is that of Serine/threonine-protein kinase greatwall (MASTL) from Gallus gallus (Chicken).